A 442-amino-acid chain; its full sequence is Tubby-related protein 3 (442 aa).

The tract at residues 23–68 (MRQAKLDYQRLLLEKRQRKKRLEPFMVQPNPEARLRRAKPRASDEQ) is required for association with the IFT complex A (IFT-A). Positions 101–177 (PSVSSSVVEE…TSGSATAAQP (77 aa)) are disordered. Residues 145–162 (GISQSACLERPNSASSQN) show a composition bias toward polar residues. Positions 163 to 175 (STDTGTSGSATAA) are enriched in low complexity.

The protein belongs to the TUB family. As to quaternary structure, associates with the IFT complex A (IFT-A). Interacts with SIRT1. As to expression, expressed at high levels in testis, ovaries, thyroid, and spinal cord.

It localises to the nucleus. Its subcellular location is the cell membrane. The protein resides in the cell projection. The protein localises to the cilium. It is found in the cytoplasm. It localises to the secreted. Functionally, negative regulator of the Shh signaling transduction pathway: recruited to primary cilia via association with the IFT complex A (IFT-A) and is required for recruitment of G protein-coupled receptor GPR161 to cilia, a promoter of PKA-dependent basal repression machinery in Shh signaling. Binds to phosphorylated inositide (phosphoinositide) lipids. Both IFT-A- and phosphoinositide-binding properties are required to regulate ciliary G protein-coupled receptor trafficking. During adipogenesis, regulates ciliary trafficking of FFAR4 in preadipocytes. The polypeptide is Tubby-related protein 3 (Homo sapiens (Human)).